Reading from the N-terminus, the 285-residue chain is HTH-type transcriptional regulator YofA (285 aa).

An HTH lysR-type domain is found at 1–58; sequence MESGDLKIFQAVAREGSITKAAQMLNYVQSNVTARVHNLEEDLNIRLFHRTNRGMKLT. A DNA-binding region (H-T-H motif) is located at residues 18–37; it reads ITKAAQMLNYVQSNVTARVH.

The protein belongs to the LysR transcriptional regulatory family.

The protein localises to the cytoplasm. Its function is as follows. Regulates expression of the cell division protein ftsW, and is essential for cell viability during stationary phase. The protein is HTH-type transcriptional regulator YofA (yofA) of Bacillus subtilis (strain 168).